A 465-amino-acid chain; its full sequence is Adenosylhomocysteinase (465 aa).

Residues threonine 56, aspartate 131, and glutamate 191 each contribute to the substrate site. An NAD(+)-binding site is contributed by 192–194; that stretch reads TTT. Positions 221 and 225 each coordinate substrate. Residues asparagine 226, 255 to 260, glutamate 278, asparagine 313, 334 to 336, and asparagine 379 each bind NAD(+); these read GYGDVG and IGH.

The protein belongs to the adenosylhomocysteinase family. NAD(+) serves as cofactor.

Its subcellular location is the cytoplasm. The catalysed reaction is S-adenosyl-L-homocysteine + H2O = L-homocysteine + adenosine. It functions in the pathway amino-acid biosynthesis; L-homocysteine biosynthesis; L-homocysteine from S-adenosyl-L-homocysteine: step 1/1. Its function is as follows. May play a key role in the regulation of the intracellular concentration of adenosylhomocysteine. The sequence is that of Adenosylhomocysteinase from Chelativorans sp. (strain BNC1).